Consider the following 200-residue polypeptide: Proteasome subunit beta 2 (200 aa).

Residues 1-7 (MEEKKTG) constitute a propeptide, removed in mature form; by autocatalysis. Catalysis depends on Thr-8, which acts as the Nucleophile.

Belongs to the peptidase T1B family. The 20S proteasome core is composed of 14 alpha and 14 beta subunits that assemble into four stacked heptameric rings, resulting in a barrel-shaped structure. The two inner rings, each composed of seven catalytic beta subunits, are sandwiched by two outer rings, each composed of seven alpha subunits. The catalytic chamber with the active sites is on the inside of the barrel. Has a gated structure, the ends of the cylinder being occluded by the N-termini of the alpha-subunits. Is capped at one or both ends by the proteasome regulatory ATPase, PAN.

It is found in the cytoplasm. It catalyses the reaction Cleavage of peptide bonds with very broad specificity.. The formation of the proteasomal ATPase PAN-20S proteasome complex, via the docking of the C-termini of PAN into the intersubunit pockets in the alpha-rings, triggers opening of the gate for substrate entry. Interconversion between the open-gate and close-gate conformations leads to a dynamic regulation of the 20S proteasome proteolysis activity. Component of the proteasome core, a large protease complex with broad specificity involved in protein degradation. The protein is Proteasome subunit beta 2 of Thermococcus gammatolerans (strain DSM 15229 / JCM 11827 / EJ3).